We begin with the raw amino-acid sequence, 280 residues long: 4-diphosphocytidyl-2-C-methyl-D-erythritol kinase (280 aa).

Lys8 is a catalytic residue. 91–101 (PVAAGLAGGST) is a binding site for ATP. The active site involves Asp133.

The protein belongs to the GHMP kinase family. IspE subfamily.

The catalysed reaction is 4-CDP-2-C-methyl-D-erythritol + ATP = 4-CDP-2-C-methyl-D-erythritol 2-phosphate + ADP + H(+). Its pathway is isoprenoid biosynthesis; isopentenyl diphosphate biosynthesis via DXP pathway; isopentenyl diphosphate from 1-deoxy-D-xylulose 5-phosphate: step 3/6. In terms of biological role, catalyzes the phosphorylation of the position 2 hydroxy group of 4-diphosphocytidyl-2C-methyl-D-erythritol. The chain is 4-diphosphocytidyl-2-C-methyl-D-erythritol kinase from Clostridium botulinum (strain ATCC 19397 / Type A).